Reading from the N-terminus, the 341-residue chain is UDP-3-O-acylglucosamine N-acyltransferase (341 aa).

The active-site Proton acceptor is His239.

Belongs to the transferase hexapeptide repeat family. LpxD subfamily. Homotrimer.

It catalyses the reaction a UDP-3-O-[(3R)-3-hydroxyacyl]-alpha-D-glucosamine + a (3R)-hydroxyacyl-[ACP] = a UDP-2-N,3-O-bis[(3R)-3-hydroxyacyl]-alpha-D-glucosamine + holo-[ACP] + H(+). It participates in bacterial outer membrane biogenesis; LPS lipid A biosynthesis. Functionally, catalyzes the N-acylation of UDP-3-O-acylglucosamine using 3-hydroxyacyl-ACP as the acyl donor. Is involved in the biosynthesis of lipid A, a phosphorylated glycolipid that anchors the lipopolysaccharide to the outer membrane of the cell. This Shewanella sp. (strain MR-7) protein is UDP-3-O-acylglucosamine N-acyltransferase.